Reading from the N-terminus, the 96-residue chain is Co-chaperonin GroES (96 aa).

This sequence belongs to the GroES chaperonin family. In terms of assembly, heptamer of 7 subunits arranged in a ring. Interacts with the chaperonin GroEL.

Its subcellular location is the cytoplasm. Together with the chaperonin GroEL, plays an essential role in assisting protein folding. The GroEL-GroES system forms a nano-cage that allows encapsulation of the non-native substrate proteins and provides a physical environment optimized to promote and accelerate protein folding. GroES binds to the apical surface of the GroEL ring, thereby capping the opening of the GroEL channel. This is Co-chaperonin GroES from Shewanella piezotolerans (strain WP3 / JCM 13877).